Consider the following 478-residue polypeptide: uncharacterized protein (478 aa).

The N-terminal stretch at 1–19 is a signal peptide; the sequence is MKLFPLCLSALVMSTATCA. Residues 20–214 lie on the Lumenal side of the membrane; sequence SSVEGAIEKV…VPVTLKLQRQ (195 aa). The chain crosses the membrane as a helical span at residues 215-235; it reads IFLSFSIVYGLISLWWAIRCI. The Cytoplasmic portion of the chain corresponds to 236–240; it reads CSRTK. The chain crosses the membrane as a helical span at residues 241 to 261; sequence LHLVQVCLFCWFSFFILNHPV. Topologically, residues 262 to 289 are lumenal; the sequence is KQRIFSIDNPDEYLVPFVVSCFTYFLGD. Residues 290–310 form a helical membrane-spanning segment; the sequence is GIEYALYSLFITTTVLGFGTI. Topologically, residues 311 to 317 are cytoplasmic; it reads RRTSKKM. A helical transmembrane segment spans residues 318-338; the sequence is VLFFSLLTCGQAFLVNVAPMV. The Lumenal portion of the chain corresponds to 339–356; it reads YPLLYISGSDKACVLRMV. The helical transmembrane segment at 357-377 threads the bilayer; that stretch reads WVFNKFLYLPLITFLGAVLAF. The Cytoplasmic portion of the chain corresponds to 378 to 391; that stretch reads RFRLKKASQFDTRW. A helical membrane pass occupies residues 392–412; the sequence is NLFALTLAIIILFAFNDLVIF. Residues 413–427 lie on the Lumenal side of the membrane; that stretch reads DKLQKLWKYDDTTLE. A helical membrane pass occupies residues 428–448; it reads YLKIVNGGIKFVAFSILLGPY. Residues 449-478 lie on the Cytoplasmic side of the membrane; sequence SKLFAEPKSLQLDDFLGKHDGHKDPSLEKF.

It localises to the endoplasmic reticulum membrane. The protein localises to the golgi apparatus membrane. This is an uncharacterized protein from Schizosaccharomyces pombe (strain 972 / ATCC 24843) (Fission yeast).